Reading from the N-terminus, the 126-residue chain is NADH-quinone oxidoreductase subunit A (126 aa).

Helical transmembrane passes span Ile11–Leu31, Phe64–Ala84, and Glu98–Ile118.

This sequence belongs to the complex I subunit 3 family. As to quaternary structure, NDH-1 is composed of 14 different subunits. Subunits NuoA, H, J, K, L, M, N constitute the membrane sector of the complex.

It localises to the cell inner membrane. The catalysed reaction is a quinone + NADH + 5 H(+)(in) = a quinol + NAD(+) + 4 H(+)(out). Its function is as follows. NDH-1 shuttles electrons from NADH, via FMN and iron-sulfur (Fe-S) centers, to quinones in the respiratory chain. The immediate electron acceptor for the enzyme in this species is believed to be a menaquinone. Couples the redox reaction to proton translocation (for every two electrons transferred, four hydrogen ions are translocated across the cytoplasmic membrane), and thus conserves the redox energy in a proton gradient. The protein is NADH-quinone oxidoreductase subunit A of Cytophaga hutchinsonii (strain ATCC 33406 / DSM 1761 / CIP 103989 / NBRC 15051 / NCIMB 9469 / D465).